Consider the following 331-residue polypeptide: UDP-N-acetylenolpyruvoylglucosamine reductase (331 aa).

In terms of domain architecture, FAD-binding PCMH-type spans 54 to 221; that stretch reads RVGGAAELYV…TQATFQLQPG (168 aa). R200 is a catalytic residue. S251 serves as the catalytic Proton donor. E321 is an active-site residue.

The protein belongs to the MurB family. It depends on FAD as a cofactor.

The protein localises to the cytoplasm. The catalysed reaction is UDP-N-acetyl-alpha-D-muramate + NADP(+) = UDP-N-acetyl-3-O-(1-carboxyvinyl)-alpha-D-glucosamine + NADPH + H(+). It participates in cell wall biogenesis; peptidoglycan biosynthesis. In terms of biological role, cell wall formation. The sequence is that of UDP-N-acetylenolpyruvoylglucosamine reductase from Trichormus variabilis (strain ATCC 29413 / PCC 7937) (Anabaena variabilis).